We begin with the raw amino-acid sequence, 132 residues long: Transmembrane protein 170B (132 aa).

At 1–37 the chain is on the extracellular side; sequence MRAEGADHSMINLSVQQVLSLWAHGTVLRNLTEMWYW. N-linked (GlcNAc...) asparagine glycosylation is present at Asn-12. A helical transmembrane segment spans residues 38–58; the sequence is IFLWALFSSLFVHGAAGVLMF. The Cytoplasmic portion of the chain corresponds to 59–68; sequence VMLQRHRQGR. The chain crosses the membrane as a helical span at residues 69–89; the sequence is VISIIAVSIGFLASVTGAMIT. The Extracellular segment spans residues 90-104; the sequence is SAAVAGIYRVAGKNM. Residues 105-125 traverse the membrane as a helical segment; the sequence is APLEALVWGVGQTVLTLIISF. Over 126–132 the chain is Cytoplasmic; sequence SRILATL.

This sequence belongs to the TMEM170 family. As to quaternary structure, interacts with CTNNB1.

It is found in the cell membrane. The sequence is that of Transmembrane protein 170B from Mus musculus (Mouse).